The primary structure comprises 220 residues: Probable cytidylate kinase (220 aa).

10-18 (GPAASGKSS) contacts ATP.

This sequence belongs to the cytidylate kinase family. Type 1 subfamily.

It carries out the reaction CMP + ATP = CDP + ADP. The enzyme catalyses dCMP + ATP = dCDP + ADP. The polypeptide is Probable cytidylate kinase (Encephalitozoon cuniculi (strain GB-M1) (Microsporidian parasite)).